Consider the following 625-residue polypeptide: Chaperone protein HtpG (625 aa).

The interval 1–337 (MSTNQETRGF…TNDLPLNVSR (337 aa)) is a; substrate-binding. The tract at residues 338 to 554 (EILQENKITA…NDEMTTQMAK (217 aa)) is b. The interval 555–625 (LFAAMGQKAP…FIKRMNKLLG (71 aa)) is c.

It belongs to the heat shock protein 90 family. In terms of assembly, homodimer.

The protein resides in the cytoplasm. Its function is as follows. Molecular chaperone. Has ATPase activity. In Actinobacillus pleuropneumoniae serotype 3 (strain JL03), this protein is Chaperone protein HtpG.